Reading from the N-terminus, the 632-residue chain is MAHETMSFQAEVKQLLHLMIHSLYSNKEIFLRELVSNASDAADKLRFEGLADNALYEDDPNVRIRIGYDKAARTITIDDNGIGMSRDEAIANLGTIARSGTKEFFTKLSGDQQKDAALIGQFGVGFYSGFIVADKITVETRRAGLPASEAVRWESAGEGDFTIDAIERAQRGTTITLHLREGEDELLSSHRLQSIIQKYSDHIALPILMQKEEWDQEKGEMVLKDEDETVNQASALWTRSKSEVSDEQYTQFYQHIAHDHQDPLTWTHNRVEGRSEYTQLLFVPSHAPFDMWNRDYRGGLKLYVKRVFIMDDAEQLLPQYLRFVKGVVDSADLPLNVSREILQESRDVKAIREGVTKRALSMLEELANAEEDAGKEKYKTFWGAFGQVLKEGLGEDHANRERIAKLLRFASTHGDTDAQDVSLADYVSRMKPEQSRIYYVTADAWQAAKNSPHLEVFRKKGVEVLLLTDRVDEWMLSFLQEFDGKPLASVARGDLDLGELNDEEKKAQEEAGEAIKPVVEKMKEALGDKVKEVRVTFRLTDSPSCLVADDNDMSGYLQRMLKAAGQNAPAMQPILEINPEHALVKQLKADSADFGDWCHLLFDQALLAEGGMLDDPASFVKRTNALLLSRAA.

Residues M1 to R339 are a; substrate-binding. Residues E340–R559 are b. The segment at M560 to A632 is c.

It belongs to the heat shock protein 90 family. As to quaternary structure, homodimer.

Its subcellular location is the cytoplasm. Its function is as follows. Molecular chaperone. Has ATPase activity. The sequence is that of Chaperone protein HtpG from Burkholderia lata (strain ATCC 17760 / DSM 23089 / LMG 22485 / NCIMB 9086 / R18194 / 383).